The sequence spans 373 residues: Protein SENSITIVE TO PROTON RHIZOTOXICITY 2 (373 aa).

2 C2H2-type zinc fingers span residues 217-239 and 327-362; these read HYCQICGKGFKRDANLRMHMRAH and KHCGDIKWVCSCGTKFSRKDKLMSHVSLFLGHVPAH.

As to expression, expressed at low levels in roots (e.g. root tips and lateral roots), leaves (e.g. at the edge of mature leaves, possibly in hydathodes, and in vascular bundles), flowers (e.g. floral filaments), stems, siliques and cotyledons.

Its subcellular location is the nucleus. Functionally, probable transcription factor. Together with STOP1, plays a critical role in tolerance to major stress factors in acid soils such as proton H(+) and aluminum ion Al(3+). Required for the expression of genes in response to acidic stress (e.g. ALMT1 and MATE), and Al-activated citrate exudation. The sequence is that of Protein SENSITIVE TO PROTON RHIZOTOXICITY 2 from Arabidopsis thaliana (Mouse-ear cress).